The sequence spans 196 residues: CASP-like protein 1D1 (196 aa).

The segment covering 1–18 (MASTDKPDRESIKSEEAP) has biased composition (basic and acidic residues). Positions 1-22 (MASTDKPDRESIKSEEAPAAHP) are disordered. Residues 1 to 29 (MASTDKPDRESIKSEEAPAAHPRRSNYSS) are Cytoplasmic-facing. Residues 30–50 (VHVALRFLLFAASVTAVVVMV) form a helical membrane-spanning segment. At 51 to 84 (TAKQTKIVPVPGLPISVPLEAKFSDSPAFLYFIS) the chain is on the extracellular side. A helical membrane pass occupies residues 85–105 (ALSVAGLYGILTTLAAISIVL). The Cytoplasmic portion of the chain corresponds to 106–112 (KPAYATR). A helical membrane pass occupies residues 113–133 (FLLHFALLDVLMLGIVASATG). The Extracellular segment spans residues 134 to 167 (AAGGVAYVGLKGNSHVRWGKVCNVYDKFCQHVGS). The helical transmembrane segment at 168–188 (SIAVALFASVLLVLLTMLSVF) threads the bilayer. Over 189–196 (SIYRKIPK) the chain is Cytoplasmic.

This sequence belongs to the Casparian strip membrane proteins (CASP) family. As to quaternary structure, homodimer and heterodimers.

It is found in the cell membrane. The protein is CASP-like protein 1D1 of Populus trichocarpa (Western balsam poplar).